A 184-amino-acid polypeptide reads, in one-letter code: NADH-quinone oxidoreductase subunit B (184 aa).

Residues Cys37, Cys38, Cys103, and Cys132 each coordinate [4Fe-4S] cluster.

This sequence belongs to the complex I 20 kDa subunit family. In terms of assembly, NDH-1 is composed of 14 different subunits. Subunits NuoB, C, D, E, F, and G constitute the peripheral sector of the complex. Requires [4Fe-4S] cluster as cofactor.

The protein resides in the cell membrane. The enzyme catalyses a quinone + NADH + 5 H(+)(in) = a quinol + NAD(+) + 4 H(+)(out). In terms of biological role, NDH-1 shuttles electrons from NADH, via FMN and iron-sulfur (Fe-S) centers, to quinones in the respiratory chain. The immediate electron acceptor for the enzyme in this species is believed to be a menaquinone. Couples the redox reaction to proton translocation (for every two electrons transferred, four hydrogen ions are translocated across the cytoplasmic membrane), and thus conserves the redox energy in a proton gradient. The protein is NADH-quinone oxidoreductase subunit B of Mycobacteroides abscessus (strain ATCC 19977 / DSM 44196 / CCUG 20993 / CIP 104536 / JCM 13569 / NCTC 13031 / TMC 1543 / L948) (Mycobacterium abscessus).